Here is a 336-residue protein sequence, read N- to C-terminus: Phosphate acyltransferase (336 aa).

Belongs to the PlsX family. As to quaternary structure, homodimer. Probably interacts with PlsY.

The protein resides in the cytoplasm. The catalysed reaction is a fatty acyl-[ACP] + phosphate = an acyl phosphate + holo-[ACP]. It functions in the pathway lipid metabolism; phospholipid metabolism. Its function is as follows. Catalyzes the reversible formation of acyl-phosphate (acyl-PO(4)) from acyl-[acyl-carrier-protein] (acyl-ACP). This enzyme utilizes acyl-ACP as fatty acyl donor, but not acyl-CoA. The chain is Phosphate acyltransferase from Pseudomonas putida (strain ATCC 700007 / DSM 6899 / JCM 31910 / BCRC 17059 / LMG 24140 / F1).